A 394-amino-acid chain; its full sequence is Ribose-phosphate pyrophosphokinase 5, chloroplastic (394 aa).

A chloroplast-targeting transit peptide spans 1 to 33; sequence MASIVQPSPTFPALNLRRSSLIRPPSSVRFPLK. Positions 202, 204, 213, and 217 each coordinate Mg(2+). A binding of phosphoribosylpyrophosphate region spans residues 288–303; sequence GKVAIMVDDMIDTAGT.

This sequence belongs to the ribose-phosphate pyrophosphokinase family.

The protein localises to the plastid. Its subcellular location is the chloroplast. It catalyses the reaction D-ribose 5-phosphate + ATP = 5-phospho-alpha-D-ribose 1-diphosphate + AMP + H(+). The protein is Ribose-phosphate pyrophosphokinase 5, chloroplastic (PRS5) of Arabidopsis thaliana (Mouse-ear cress).